The sequence spans 469 residues: Serine/threonine-protein kinases PknA (469 aa).

Residues 20-281 (YRLQWIIGHG…NEMALAVSAV (262 aa)) form the Protein kinase domain. ATP contacts are provided by residues 26 to 34 (IGHGGMSTV) and Lys49. Asp148 acts as the Proton acceptor in catalysis. Disordered regions lie at residues 286–307 (RPPQ…PSES) and 359–454 (FNDT…PADD). Composition is skewed to low complexity over residues 365–384 (ETTT…EETT) and 399–413 (TEPE…TSEE). Polar residues predominate over residues 430–443 (VPQIPTSTPRTSAS).

This sequence belongs to the protein kinase superfamily. Ser/Thr protein kinase family.

The enzyme catalyses L-seryl-[protein] + ATP = O-phospho-L-seryl-[protein] + ADP + H(+). The catalysed reaction is L-threonyl-[protein] + ATP = O-phospho-L-threonyl-[protein] + ADP + H(+). This is Serine/threonine-protein kinases PknA (pknA) from Corynebacterium glutamicum (strain ATCC 13032 / DSM 20300 / JCM 1318 / BCRC 11384 / CCUG 27702 / LMG 3730 / NBRC 12168 / NCIMB 10025 / NRRL B-2784 / 534).